The primary structure comprises 250 residues: 3-deoxy-manno-octulosonate cytidylyltransferase (250 aa).

It belongs to the KdsB family.

The protein resides in the cytoplasm. The enzyme catalyses 3-deoxy-alpha-D-manno-oct-2-ulosonate + CTP = CMP-3-deoxy-beta-D-manno-octulosonate + diphosphate. The protein operates within nucleotide-sugar biosynthesis; CMP-3-deoxy-D-manno-octulosonate biosynthesis; CMP-3-deoxy-D-manno-octulosonate from 3-deoxy-D-manno-octulosonate and CTP: step 1/1. It functions in the pathway bacterial outer membrane biogenesis; lipopolysaccharide biosynthesis. In terms of biological role, activates KDO (a required 8-carbon sugar) for incorporation into bacterial lipopolysaccharide in Gram-negative bacteria. This is 3-deoxy-manno-octulosonate cytidylyltransferase from Francisella tularensis subsp. holarctica (strain FTNF002-00 / FTA).